Here is a 183-residue protein sequence, read N- to C-terminus: Caspase recruitment domain-containing protein 19 (183 aa).

C7 and C77 are disulfide-bonded. The 92-residue stretch at D8 to Y99 folds into the CARD domain. A helical transmembrane segment spans residues G122–C142.

In terms of assembly, associates with BCL10 by CARD-CARD interaction.

Its subcellular location is the endoplasmic reticulum membrane. It is found in the mitochondrion membrane. Its function is as follows. Plays a role in inhibiting the effects of BCL10-induced activation of NF-kappa-B. The chain is Caspase recruitment domain-containing protein 19 from Mus musculus (Mouse).